The chain runs to 140 residues: Nucleoside diphosphate kinase (140 aa).

ATP-binding residues include K11, F59, R87, T93, R104, and N114. Catalysis depends on H117, which acts as the Pros-phosphohistidine intermediate.

The protein belongs to the NDK family. As to quaternary structure, homotetramer. It depends on Mg(2+) as a cofactor.

The protein localises to the cytoplasm. The enzyme catalyses a 2'-deoxyribonucleoside 5'-diphosphate + ATP = a 2'-deoxyribonucleoside 5'-triphosphate + ADP. The catalysed reaction is a ribonucleoside 5'-diphosphate + ATP = a ribonucleoside 5'-triphosphate + ADP. In terms of biological role, major role in the synthesis of nucleoside triphosphates other than ATP. The ATP gamma phosphate is transferred to the NDP beta phosphate via a ping-pong mechanism, using a phosphorylated active-site intermediate. The chain is Nucleoside diphosphate kinase from Bradyrhizobium sp. (strain ORS 278).